A 248-amino-acid polypeptide reads, in one-letter code: Probable transcriptional regulatory protein RPC_4807 (248 aa).

Positions 1–21 (MAGHSQFKNIMHRKGRQDAQK) are disordered.

Belongs to the TACO1 family.

The protein resides in the cytoplasm. In Rhodopseudomonas palustris (strain BisB18), this protein is Probable transcriptional regulatory protein RPC_4807.